The sequence spans 514 residues: Ribonuclease Y (514 aa).

Residues 3-23 (YMIIYEIIAGILIVVAILIHF) form a helical membrane-spanning segment. Residues 204-289 (TVHVVTLPND…EMVEKAEKEL (86 aa)) enclose the KH domain. An HD domain is found at 330–423 (VLKHSVEVAY…VQAADAISAA (94 aa)).

It belongs to the RNase Y family.

Its subcellular location is the cell membrane. In terms of biological role, endoribonuclease that initiates mRNA decay. This chain is Ribonuclease Y, found in Clostridium kluyveri (strain ATCC 8527 / DSM 555 / NBRC 12016 / NCIMB 10680 / K1).